Here is a 127-residue protein sequence, read N- to C-terminus: Aspartate 1-decarboxylase (127 aa).

Residue Ser25 is the Schiff-base intermediate with substrate; via pyruvic acid of the active site. Ser25 bears the Pyruvic acid (Ser) mark. Position 57 (Thr57) interacts with substrate. The active-site Proton donor is Tyr58. 73–75 provides a ligand contact to substrate; that stretch reads GAA.

It belongs to the PanD family. Heterooctamer of four alpha and four beta subunits. It depends on pyruvate as a cofactor. In terms of processing, is synthesized initially as an inactive proenzyme, which is activated by self-cleavage at a specific serine bond to produce a beta-subunit with a hydroxyl group at its C-terminus and an alpha-subunit with a pyruvoyl group at its N-terminus.

It is found in the cytoplasm. The enzyme catalyses L-aspartate + H(+) = beta-alanine + CO2. Its pathway is cofactor biosynthesis; (R)-pantothenate biosynthesis; beta-alanine from L-aspartate: step 1/1. In terms of biological role, catalyzes the pyruvoyl-dependent decarboxylation of aspartate to produce beta-alanine. This Bacillus licheniformis (strain ATCC 14580 / DSM 13 / JCM 2505 / CCUG 7422 / NBRC 12200 / NCIMB 9375 / NCTC 10341 / NRRL NRS-1264 / Gibson 46) protein is Aspartate 1-decarboxylase.